Consider the following 395-residue polypeptide: Flagellin D (395 aa).

The protein belongs to the bacterial flagellin family.

It localises to the secreted. The protein localises to the bacterial flagellum. Functionally, flagellin is the subunit protein which polymerizes to form the filaments of bacterial flagella. The chain is Flagellin D (flaD) from Rhizobium meliloti (Ensifer meliloti).